Consider the following 174-residue polypeptide: Co-chaperone protein HscB homolog (174 aa).

One can recognise a J domain in the interval 2-74 (NYFELFKFSP…IRRAEHLLSL (73 aa)).

The protein belongs to the HscB family. In terms of assembly, interacts with HscA and stimulates its ATPase activity.

Functionally, co-chaperone involved in the maturation of iron-sulfur cluster-containing proteins. Seems to help targeting proteins to be folded toward HscA. The sequence is that of Co-chaperone protein HscB homolog from Shewanella sp. (strain W3-18-1).